The chain runs to 309 residues: Taste receptor type 2 member 8 (309 aa).

At 1-7 (MFSPADN) the chain is on the extracellular side. A helical membrane pass occupies residues 8–28 (IFIILITGEFILGILGNGYIA). Over 29-50 (LVNWIDWIKKKKISTVDYILTN) the chain is Cytoplasmic. A helical membrane pass occupies residues 51–71 (LVIARICLISVMVVNGIVIVL). Over 72–82 (NPDVYTKNKQQ) the chain is Extracellular. The helical transmembrane segment at 83 to 103 (IVIFTFWTFANYLNMWITTCL) threads the bilayer. At 104–131 (NVFYFLKIASSSHPLFLWLKWKIDMVVH) the chain is on the cytoplasmic side. The chain crosses the membrane as a helical span at residues 132-152 (WILLGCFAISLLVSLIAAIVL). Residues 153–184 (SCDYRFHAIAKHKRNITEMFHVSKIPYFEPLT) are Extracellular-facing. Asparagine 167 is a glycosylation site (N-linked (GlcNAc...) asparagine). Residues 185 to 205 (LFNLFAIVPFIVSLISFFLLV) traverse the membrane as a helical segment. Residues 206–239 (RSLWRHTKQIKLYATGSRDPSTEVHVRAIKTMTS) are Cytoplasmic-facing. The chain crosses the membrane as a helical span at residues 240–260 (FIFFFFLYYISSILMTFSYLM). The Extracellular segment spans residues 261–266 (TKYKLA). Residues 267 to 287 (VEFGEIAAILYPLGHSLILIV) traverse the membrane as a helical segment. Over 288–309 (LNNKLRQTFVRMLTCRKIACMI) the chain is Cytoplasmic.

The protein belongs to the G-protein coupled receptor T2R family. In terms of tissue distribution, expressed in subsets of taste receptor cells of the tongue and palate epithelium and exclusively in gustducin-positive cells.

It localises to the membrane. Functionally, receptor that may play a role in the perception of bitterness and is gustducin-linked. May play a role in sensing the chemical composition of the gastrointestinal content. The activity of this receptor may stimulate alpha gustducin, mediate PLC-beta-2 activation and lead to the gating of TRPM5. This Homo sapiens (Human) protein is Taste receptor type 2 member 8 (TAS2R8).